The chain runs to 109 residues: Flagellar hook-basal body complex protein FliE (109 aa).

This sequence belongs to the FliE family.

It is found in the bacterial flagellum basal body. In Pseudomonas paraeruginosa (strain DSM 24068 / PA7) (Pseudomonas aeruginosa (strain PA7)), this protein is Flagellar hook-basal body complex protein FliE.